We begin with the raw amino-acid sequence, 258 residues long: Snake venom serine proteinase 5 (258 aa).

The first 18 residues, 1 to 18 (MVLIRVLANLLILQLSYA), serve as a signal peptide directing secretion. The propeptide occupies 19–24 (QKSSEL). Residues 25-249 (VVGGDECNIN…YNDWIQSIIA (225 aa)) enclose the Peptidase S1 domain. Disulfide bonds link cysteine 31–cysteine 163, cysteine 50–cysteine 66, cysteine 98–cysteine 256, cysteine 142–cysteine 210, cysteine 174–cysteine 189, and cysteine 200–cysteine 225. An N-linked (GlcNAc...) asparagine glycan is attached at asparagine 44. Residues histidine 65 and aspartate 110 each act as charge relay system in the active site. Serine 204 serves as the catalytic Charge relay system.

It belongs to the peptidase S1 family. Snake venom subfamily. In terms of assembly, monomer. In terms of tissue distribution, expressed by the venom gland.

The protein localises to the secreted. Functionally, snake venom serine protease that may act in the hemostasis system of the prey. The protein is Snake venom serine proteinase 5 of Crotalus adamanteus (Eastern diamondback rattlesnake).